Reading from the N-terminus, the 552-residue chain is Thermosome subunit beta (552 aa).

This sequence belongs to the TCP-1 chaperonin family. As to quaternary structure, forms a Heterooligomeric complex of two stacked nine-membered rings; one of alpha and the other of beta subunits. Post-translationally, the N-terminus is blocked.

Functionally, molecular chaperone; binds unfolded polypeptides in vitro, and has a weak ATPase activity. This Sulfurisphaera tokodaii (strain DSM 16993 / JCM 10545 / NBRC 100140 / 7) (Sulfolobus tokodaii) protein is Thermosome subunit beta (thsB).